A 348-amino-acid chain; its full sequence is D-alanine--D-alanine ligase (348 aa).

One can recognise an ATP-grasp domain in the interval 132 to 334; the sequence is KRVLESADIP…YAELIEELVR (203 aa). An ATP-binding site is contributed by 162–217; it reads EAVLSYPVFVKPANMGSSVGISKAESEEELRAAILLALTYDSRILIEQGVLAREIE. 3 residues coordinate Mg(2+): Asp288, Glu301, and Asn303.

Belongs to the D-alanine--D-alanine ligase family. Mg(2+) is required as a cofactor. It depends on Mn(2+) as a cofactor.

The protein localises to the cytoplasm. It catalyses the reaction 2 D-alanine + ATP = D-alanyl-D-alanine + ADP + phosphate + H(+). The protein operates within cell wall biogenesis; peptidoglycan biosynthesis. Functionally, cell wall formation. The sequence is that of D-alanine--D-alanine ligase from Streptococcus equi subsp. zooepidemicus (strain MGCS10565).